Reading from the N-terminus, the 286-residue chain is General stress protein A (286 aa).

Residues cysteine 12–tyrosine 17 and aspartate 111–cysteine 112 contribute to the UDP site. Residues aspartate 111, aspartate 113, and histidine 247 each coordinate Mn(2+). Histidine 247 to lysine 253 provides a ligand contact to UDP.

It belongs to the glycosyltransferase 8 family.

The protein is General stress protein A (gspA) of Bacillus subtilis (strain 168).